A 152-amino-acid polypeptide reads, in one-letter code: ADP-ribose glycohydrolase OARD1 (152 aa).

An N-acetylalanine modification is found at Ala2. One can recognise a Macro domain in the interval 2-152 (AGSPNEDSEG…TDIRITVYTL (151 aa)). Position 4 is a phosphoserine (Ser4). Leu21 contacts substrate. The active-site Nucleophile is Lys84. Residues 119-125 (RIGCGLD) and Leu152 contribute to the substrate site. The active-site Proton acceptor is the Asp125.

The protein localises to the nucleus. Its subcellular location is the nucleoplasm. The protein resides in the nucleolus. It is found in the chromosome. The enzyme catalyses 2''-O-acetyl-ADP-D-ribose + H2O = ADP-D-ribose + acetate + H(+). It catalyses the reaction 5-O-(ADP-D-ribosyl)-L-glutamyl-[protein] + H2O = L-glutamyl-[protein] + ADP-D-ribose + H(+). It carries out the reaction alpha-NAD(+) + H2O = ADP-D-ribose + nicotinamide + H(+). Its activity is regulated as follows. Subject to competitive inhibition by the product ADP-ribose. Functionally, ADP-ribose glycohydrolase that hydrolyzes ADP-ribose and acts on different substrates, such as proteins ADP-ribosylated on glutamate and O-acetyl-ADP-D-ribose. Specifically acts as a glutamate mono-ADP-ribosylhydrolase by mediating the removal of mono-ADP-ribose attached to glutamate residues on proteins. Does not act on poly-ADP-ribosylated proteins: the poly-ADP-ribose chain of poly-ADP-ribosylated glutamate residues must by hydrolyzed into mono-ADP-ribosylated glutamate by PARG to become a substrate for OARD1. Deacetylates O-acetyl-ADP ribose, a signaling molecule generated by the deacetylation of acetylated lysine residues in histones and other proteins. Catalyzes the deacylation of O-acetyl-ADP-ribose, O-propionyl-ADP-ribose and O-butyryl-ADP-ribose, yielding ADP-ribose plus acetate, propionate and butyrate, respectively. The sequence is that of ADP-ribose glycohydrolase OARD1 from Bos taurus (Bovine).